We begin with the raw amino-acid sequence, 858 residues long: Phospholipase D gamma 1 (858 aa).

Residues 27–163 (PFATSSGSLR…CSGNRIEGLF (137 aa)) form the C2 domain. Aspartate 225 serves as a coordination point for Ca(2+). The region spanning 364–399 (TIYTHHQKTVIVDAEAAQNRRKIVAFVGGLDLCNGR) is the PLD phosphodiesterase 1 domain. Active-site residues include histidine 369, lysine 371, and aspartate 376. An a 1,2-diacyl-sn-glycero-3-phosphate-binding site is contributed by histidine 369. 2 residues coordinate Ca(2+): histidine 405 and histidine 437. An a 1,2-diacyl-sn-glycero-3-phosphate-binding site is contributed by glutamine 565. Serine 680 carries the phosphoserine modification. In terms of domain architecture, PLD phosphodiesterase 2 spans 704–731 (FMIYVHSKGMVVDDEFVLIGSANINQRS). Catalysis depends on residues histidine 709, lysine 711, and aspartate 716. Histidine 709 serves as a coordination point for a 1,2-diacyl-sn-glycero-3-phosphate. Glutamate 772 is a Ca(2+) binding site.

Belongs to the phospholipase D family. C2-PLD subfamily. It depends on Ca(2+) as a cofactor. Highly expressed in roots and flowers, moderately in stems, leaves and seedlings and low in siliques. Not detected in seeds.

It localises to the cytoplasm. The protein localises to the membrane. It carries out the reaction a 1,2-diacyl-sn-glycero-3-phosphocholine + H2O = a 1,2-diacyl-sn-glycero-3-phosphate + choline + H(+). Inhibited by neomycin. Up-regulated by PIP2 binding. Functionally, hydrolyzes glycerol-phospholipids at the terminal phosphodiesteric bond to generate phosphatidic acids (PA). Plays an important role in various cellular processes, including phytohormone action, vesicular trafficking, secretion, cytoskeletal arrangement, meiosis, tumor promotion, pathogenesis, membrane deterioration and senescence. Can use phosphatidylserine (PS) and phosphatidylethanolamine (PE) as substrates only in the presence of PIP2. Can use phosphatidylcholine (PC), phosphatidylglycerol (PG) or N-acylphosphatidylethanolamine (NAPE) as substrates in the presence of PE and PIP2. Involved in membrane lipid modulation under aluminum (Al) stress and negatively modulate plant tolerance to Al. This Arabidopsis thaliana (Mouse-ear cress) protein is Phospholipase D gamma 1.